Reading from the N-terminus, the 1059-residue chain is Probable sucrose-phosphate synthase (1059 aa).

4 disordered regions span residues 95–145 (AVQR…VKSR), 671–695 (RHPQWQRSEDGGESSESEESPGDSL), 710–731 (DGERSGDSGNDNSLDPDGNATD), and 748–769 (SKDTRRGGATEKSGQNSNASKF). A compositionally biased stretch (basic and acidic residues) spans 102–114 (RRLERERGRREAT). Residues 681–691 (GGESSESEESP) show a composition bias toward acidic residues.

This sequence belongs to the glycosyltransferase 1 family. Homodimer or homotetramer.

It catalyses the reaction beta-D-fructose 6-phosphate + UDP-alpha-D-glucose = sucrose 6(F)-phosphate + UDP + H(+). Its pathway is glycan biosynthesis; sucrose biosynthesis; sucrose from D-fructose 6-phosphate and UDP-alpha-D-glucose: step 1/2. Its activity is regulated as follows. Activity is regulated by phosphorylation and moderated by concentration of metabolites and light. Functionally, plays a role in photosynthetic sucrose synthesis by catalyzing the rate-limiting step of sucrose biosynthesis from UDP-glucose and fructose- 6-phosphate. Involved in the regulation of carbon partitioning in the leaves of plants. May regulate the synthesis of sucrose and therefore play a major role as a limiting factor in the export of photoassimilates out of the leaf. Plays a role for sucrose availability that is essential for plant growth and fiber elongation. The polypeptide is Probable sucrose-phosphate synthase (SPS) (Vicia faba (Broad bean)).